Reading from the N-terminus, the 434-residue chain is Nuclear receptor subfamily 1 group I member 2 (434 aa).

Positions 38–107 form a DNA-binding region, nuclear receptor; it reads PQICRVCGDK…RLRKCLESGM (70 aa). 2 consecutive NR C4-type zinc fingers follow at residues 41 to 61 and 77 to 102; these read CRVCGDKATGYHFNVMTCEGC and CPFRKGACEITRKTRRQCQACRLRKC. A Bipartite nuclear localization signal motif is present at residues 66-92; the sequence is RRAMKRNARLRCPFRKGACEITRKTRR. The tract at residues 108-145 is hinge; it reads KKEMIMSDEAVEERRALIKRKKSERTGTQPLGVQGLTE. The region spanning 146 to 433 is the NR LBD domain; that stretch reads EQRMMIRELM…LMQELFGITG (288 aa). Residues serine 247, 285 to 288, and histidine 407 contribute to the hyperforin site; that span reads QLRF.

The protein belongs to the nuclear hormone receptor family. NR1 subfamily. In terms of assembly, heterodimer with RXR. Interacts with NCOA1. Interacts (via domain NR LBD) with CRY1 and CRY2 in a ligand-dependent manner. In terms of tissue distribution, expressed in liver, colon and small intestine.

It is found in the nucleus. Nuclear receptor that binds and is activated by variety of endogenous and xenobiotic compounds. Transcription factor that activates the transcription of multiple genes involved in the metabolism and secretion of potentially harmful xenobiotics, drugs and endogenous compounds. Activated by the antibiotic rifampicin and various plant metabolites, such as hyperforin, guggulipid, colupulone, and isoflavones. Response to specific ligands is species-specific. Activated by naturally occurring steroids, such as pregnenolone and progesterone. Binds to a response element in the promoters of the CYP3A4 and ABCB1/MDR1 genes. The chain is Nuclear receptor subfamily 1 group I member 2 (NR1I2) from Homo sapiens (Human).